The following is a 381-amino-acid chain: Putative heat shock protein HSP 90-beta 2 (381 aa).

Residues Asn46, Asp88, and Lys107 each contribute to the ATP site. The segment covering 145-174 (KEISDGKAEEEKGEKEEENKDDEEKPKIED) has biased composition (basic and acidic residues). The interval 145 to 192 (KEISDGKAEEEKGEKEEENKDDEEKPKIEDVGSDEEDDSGKDKKKKTK) is disordered. Ser177 is subject to Phosphoserine. A coiled-coil region spans residues 315–347 (ELPEDGEEKKRMEERKAKFENLCKFMKETLDKK).

It belongs to the heat shock protein 90 family. In terms of assembly, homodimer.

The protein localises to the cytoplasm. Its function is as follows. Putative molecular chaperone that may promote the maturation, structural maintenance and proper regulation of specific target proteins. This chain is Putative heat shock protein HSP 90-beta 2 (HSP90AB2P), found in Homo sapiens (Human).